Here is a 484-residue protein sequence, read N- to C-terminus: Chromosomal replication initiator protein DnaA (484 aa).

A domain I, interacts with DnaA modulators region spans residues 1–73; sequence MQEGKNIWSL…EILIEKGHNT (73 aa). Positions 73–140 are domain II; that stretch reads TINVEFINSP…EEIHTKYRNP (68 aa). Residues 141 to 357 are domain III, AAA+ region; it reads FLKKKYTFEN…AAVTKLKAHI (217 aa). Residues G185, G187, K188, and T189 each coordinate ATP. The domain IV, binds dsDNA stretch occupies residues 358-484; that stretch reads DLEDIEIDTS…IELMNKINKK (127 aa).

The protein belongs to the DnaA family. In terms of assembly, oligomerizes as a right-handed, spiral filament on DNA at oriC.

It is found in the cytoplasm. Its function is as follows. Plays an essential role in the initiation and regulation of chromosomal replication. ATP-DnaA binds to the origin of replication (oriC) to initiate formation of the DNA replication initiation complex once per cell cycle. Binds the DnaA box (a 9 base pair repeat at the origin) and separates the double-stranded (ds)DNA. Forms a right-handed helical filament on oriC DNA; dsDNA binds to the exterior of the filament while single-stranded (ss)DNA is stabiized in the filament's interior. The ATP-DnaA-oriC complex binds and stabilizes one strand of the AT-rich DNA unwinding element (DUE), permitting loading of DNA polymerase. After initiation quickly degrades to an ADP-DnaA complex that is not apt for DNA replication. Binds acidic phospholipids. The sequence is that of Chromosomal replication initiator protein DnaA from Borrelia hermsii (strain HS1 / DAH).